Consider the following 344-residue polypeptide: Cysteine proteinase 5 (344 aa).

Residues 1–17 form the signal peptide; it reads MKVLSFLCVLLVSVATA. The propeptide at 18-111 is activation peptide; the sequence is KQQFSELQYR…TQEEKVFTTS (94 aa). 3 disulfide bridges follow: C133/C174, C167/C207, and C265/C333. The active site involves C136. The active site involves H272. N297 is a glycosylation site (N-linked (GlcNAc...) asparagine). N311 is a catalytic residue.

The protein belongs to the peptidase C1 family. In terms of processing, glycosylated; contains GlcNAc-alpha-1-P-Ser residues.

It is found in the lysosome. The polypeptide is Cysteine proteinase 5 (cprE) (Dictyostelium discoideum (Social amoeba)).